The sequence spans 304 residues: Ribonuclease Z (304 aa).

The Zn(2+) site is built by His63, His65, Asp67, His68, His141, Asp208, and His266. Asp67 (proton acceptor) is an active-site residue.

Belongs to the RNase Z family. Homodimer. Zn(2+) serves as cofactor.

The enzyme catalyses Endonucleolytic cleavage of RNA, removing extra 3' nucleotides from tRNA precursor, generating 3' termini of tRNAs. A 3'-hydroxy group is left at the tRNA terminus and a 5'-phosphoryl group is left at the trailer molecule.. Functionally, zinc phosphodiesterase, which displays some tRNA 3'-processing endonuclease activity. Probably involved in tRNA maturation, by removing a 3'-trailer from precursor tRNA. The protein is Ribonuclease Z of Chlamydia trachomatis serovar L2 (strain ATCC VR-902B / DSM 19102 / 434/Bu).